The primary structure comprises 165 residues: Large ribosomal subunit protein uL10 (165 aa).

The protein belongs to the universal ribosomal protein uL10 family. As to quaternary structure, part of the ribosomal stalk of the 50S ribosomal subunit. The N-terminus interacts with L11 and the large rRNA to form the base of the stalk. The C-terminus forms an elongated spine to which L12 dimers bind in a sequential fashion forming a multimeric L10(L12)X complex.

Functionally, forms part of the ribosomal stalk, playing a central role in the interaction of the ribosome with GTP-bound translation factors. In Sodalis glossinidius (strain morsitans), this protein is Large ribosomal subunit protein uL10.